The following is a 648-amino-acid chain: Leucine aminopeptidase 2 (648 aa).

A peptide is bound by residues 143 to 145 and 269 to 274; these read QCQ and PYGGME. His-298 provides a ligand contact to Zn(2+). The active-site Proton acceptor is the Glu-299. Residues His-302 and Glu-321 each contribute to the Zn(2+) site. Tyr-408 functions as the Proton donor in the catalytic mechanism.

It belongs to the peptidase M1 family. It depends on Zn(2+) as a cofactor.

The protein resides in the cytoplasm. The protein localises to the nucleus. The catalysed reaction is an epoxide + H2O = an ethanediol. Functionally, aminopeptidase that preferentially cleaves di- and tripeptides. Also has low epoxide hydrolase activity (in vitro). Can hydrolyze the epoxide leukotriene LTA(4) but it forms preferentially 5,6-dihydroxy-7,9,11,14-eicosatetraenoic acid rather than the cytokine leukotriene B(4) as the product compared to the homologous mammalian enzyme (in vitro). The protein is Leucine aminopeptidase 2 of Lodderomyces elongisporus (strain ATCC 11503 / CBS 2605 / JCM 1781 / NBRC 1676 / NRRL YB-4239) (Yeast).